Here is a 423-residue protein sequence, read N- to C-terminus: Dihydroorotase-like protein (423 aa).

Belongs to the metallo-dependent hydrolases superfamily. DHOase family. PyrC' subfamily. In terms of assembly, heterododecamer of 6 active PyrB subunits and 6 non-catalytic PyrC' subunits.

Non-functional DHOase. This chain is Dihydroorotase-like protein (pyrC'), found in Pseudomonas aeruginosa (strain ATCC 15692 / DSM 22644 / CIP 104116 / JCM 14847 / LMG 12228 / 1C / PRS 101 / PAO1).